The chain runs to 977 residues: uncharacterized protein (977 aa).

Residues 1–24 (MQSNLLKVLGVLAIVATLVCFIFA) form the signal peptide. Residues 125-146 (TESTRPGKSNLDDKGNMIPIPR) are disordered. 6 helical membrane passes run 612 to 632 (IKAI…LGFA), 722 to 742 (LGLS…IVII), 754 to 774 (AFMA…FLLF), 796 to 816 (VVMM…LDFV), 833 to 853 (FIGT…INWF), and 866 to 886 (GVNM…YGYV). A disordered region spans residues 918-977 (KALSPIGMDDKTRQGITGRAEARLKQRNKTLDQAEKNRKNTPKEGGEKTNAEPPQPEARG). Basic and acidic residues predominate over residues 937–967 (AEARLKQRNKTLDQAEKNRKNTPKEGGEKTN).

The protein belongs to the TrbL/VirB6 family.

Its subcellular location is the cell membrane. This is an uncharacterized protein from Rickettsia felis (strain ATCC VR-1525 / URRWXCal2) (Rickettsia azadi).